Here is a 180-residue protein sequence, read N- to C-terminus: Vacuolar ATPase assembly protein VMA22 (180 aa).

Residues 4–38 (QALREELDSKCLQLLSDLEELEAKRAALNARVEEG) adopt a coiled-coil conformation. A disordered region spans residues 90–113 (TPEEVGPSEASLRRRKGPTKTKEL).

As to quaternary structure, accessory component of the multisubunit proton-transporting vacuolar (V)-ATPase protein pump. As to expression, predominantly expressed in the heart, liver, kidney and testis and at lower levels in the brain and lung. Undetectable in the spleen and muscles.

Its subcellular location is the endosome. It is found in the lysosome. It localises to the endoplasmic reticulum-Golgi intermediate compartment. The protein resides in the cytoplasmic vesicle. The protein localises to the COPI-coated vesicle. Its subcellular location is the endoplasmic reticulum. In terms of biological role, accessory component of the proton-transporting vacuolar (V)-ATPase protein pump involved in intracellular iron homeostasis. In aerobic conditions, required for intracellular iron homeostasis, thus triggering the activity of Fe(2+) prolyl hydroxylase (PHD) enzymes, and leading to HIF1A hydroxylation and subsequent proteasomal degradation. Necessary for endolysosomal acidification and lysosomal degradation. May be involved in Golgi homeostasis. The protein is Vacuolar ATPase assembly protein VMA22 (Vma22) of Mus musculus (Mouse).